We begin with the raw amino-acid sequence, 499 residues long: E3 ubiquitin-protein ligase TRIM69 (499 aa).

The necessary for nuclear localization stretch occupies residues 1-152 (MEVSSRPPSN…SMGQSKDFLQ (152 aa)). An RING-type zinc finger spans residues 41–82 (CPLCNDWFRDPLMLTCGHNFCQACIQNYWKMQAKETFCPECK). Residues 160 to 265 (FTEELAIYQS…NIQARMEQQN (106 aa)) adopt a coiled-coil conformation. The B30.2/SPRY domain occupies 305 to 499 (PIQYTIWREM…KEPLHIVHPQ (195 aa)). The residue at position 341 (Ser341) is a Phosphoserine.

It belongs to the TRIM/RBCC family. In terms of assembly, homo-multimer; required for antiviral activity. Interacts with PML. In terms of processing, phosphorylated. Phosphorylation is necessary for nuclear localization.

Its subcellular location is the cytoplasm. It localises to the nucleus. It is found in the nucleus speckle. The protein resides in the cytoskeleton. The protein localises to the microtubule organizing center. Its subcellular location is the centrosome. The enzyme catalyses S-ubiquitinyl-[E2 ubiquitin-conjugating enzyme]-L-cysteine + [acceptor protein]-L-lysine = [E2 ubiquitin-conjugating enzyme]-L-cysteine + N(6)-ubiquitinyl-[acceptor protein]-L-lysine.. It participates in protein modification; protein ubiquitination. Functionally, E3 ubiquitin ligase that plays an important role in antiviral immunity by restricting different viral infections including dengue virus or vesicular stomatitis indiana virus. Ubiquitinates viral proteins such as dengue virus NS3 thereby limiting infection. In addition, acts as a key mediator of type I interferon induced microtubule stabilization by directly associating to microtubules independently of its E3 ligase activity. Also plays a role in cataract formation together with TP53. Mechanistically, inhibits UVB-induced cell apoptosis and reactive oxygen species (ROS) production by inducing TP53 ubiquitination. Regulates centrosome dynamics and mitotic progression by ubiquitinating STK3/MST2; leading to its redistribution to the perinuclear cytoskeleton and subsequent phosphorylation by PLK1. This is E3 ubiquitin-protein ligase TRIM69 (Trim69) from Rattus norvegicus (Rat).